Here is a 264-residue protein sequence, read N- to C-terminus: Thymidylate synthase (264 aa).

Arg21 is a binding site for dUMP. Residue His51 coordinates (6R)-5,10-methylene-5,6,7,8-tetrahydrofolate. Residue 126–127 (RR) coordinates dUMP. Cys146 (nucleophile) is an active-site residue. DUMP contacts are provided by residues 166–169 (RSAD), Asn177, and 207–209 (HLY). (6R)-5,10-methylene-5,6,7,8-tetrahydrofolate is bound at residue Asp169. Residue Ala263 coordinates (6R)-5,10-methylene-5,6,7,8-tetrahydrofolate.

The protein belongs to the thymidylate synthase family. Bacterial-type ThyA subfamily. As to quaternary structure, homodimer.

It localises to the cytoplasm. It carries out the reaction dUMP + (6R)-5,10-methylene-5,6,7,8-tetrahydrofolate = 7,8-dihydrofolate + dTMP. The protein operates within pyrimidine metabolism; dTTP biosynthesis. Catalyzes the reductive methylation of 2'-deoxyuridine-5'-monophosphate (dUMP) to 2'-deoxythymidine-5'-monophosphate (dTMP) while utilizing 5,10-methylenetetrahydrofolate (mTHF) as the methyl donor and reductant in the reaction, yielding dihydrofolate (DHF) as a by-product. This enzymatic reaction provides an intracellular de novo source of dTMP, an essential precursor for DNA biosynthesis. The sequence is that of Thymidylate synthase from Nitrosomonas eutropha (strain DSM 101675 / C91 / Nm57).